The primary structure comprises 429 residues: Alpha-L-rhamnosidase rgxB (429 aa).

The signal sequence occupies residues 1-20; the sequence is MAPIALKILLFTSLIVPSIS. Asn-67, Asn-77, Asn-97, Asn-103, Asn-112, Asn-135, and Asn-219 each carry an N-linked (GlcNAc...) asparagine glycan. One copy of the PbH1 1 repeat lies at 217-238; the sequence is SKNITLTNWEVVNGDDSISTKA. The active-site Proton donor is Asp-231. N-linked (GlcNAc...) asparagine glycosylation is found at Asn-239, Asn-247, Asn-278, and Asn-344. 2 PbH1 repeats span residues 240-260 and 271-292; these read STDI…AIGS and VERL…YFKT. Cys-374 and Cys-380 are oxidised to a cystine. N-linked (GlcNAc...) asparagine glycosylation is found at Asn-387, Asn-395, and Asn-414.

This sequence belongs to the glycosyl hydrolase 28 family.

The protein resides in the secreted. The catalysed reaction is Hydrolysis of terminal non-reducing alpha-L-rhamnose residues in alpha-L-rhamnosides.. Its function is as follows. Alpha-L-rhamnosidase which is able to degrade p-nitrophenyl-alpha-L-rhamnopyranoside (pnp_Rha). The natural substrate of this enzyme has not been identified yet. This chain is Alpha-L-rhamnosidase rgxB (rgxB), found in Aspergillus niger (strain ATCC MYA-4892 / CBS 513.88 / FGSC A1513).